A 275-amino-acid polypeptide reads, in one-letter code: Glucan endo-1,3-beta-glucosidase, acidic isoform PR-N (275 aa).

Residue glutamate 196 is the Nucleophile of the active site.

This sequence belongs to the glycosyl hydrolase 17 family. In terms of processing, the N-terminus is blocked.

It localises to the secreted. The protein resides in the extracellular space. It carries out the reaction Hydrolysis of (1-&gt;3)-beta-D-glucosidic linkages in (1-&gt;3)-beta-D-glucans.. Functionally, implicated in the defense of plants against pathogens. The sequence is that of Glucan endo-1,3-beta-glucosidase, acidic isoform PR-N (PRN) from Nicotiana tabacum (Common tobacco).